The following is a 310-amino-acid chain: Putative carboxypeptidase SCO6489 (310 aa).

Ser-116 (nucleophile) is an active-site residue. Catalysis depends on charge relay system residues Glu-212 and His-277.

The protein belongs to the peptidase S66 family.

This is Putative carboxypeptidase SCO6489 from Streptomyces coelicolor (strain ATCC BAA-471 / A3(2) / M145).